A 257-amino-acid polypeptide reads, in one-letter code: Aspartate/glutamate leucyltransferase (257 aa).

This sequence belongs to the R-transferase family. Bpt subfamily.

The protein localises to the cytoplasm. The catalysed reaction is N-terminal L-glutamyl-[protein] + L-leucyl-tRNA(Leu) = N-terminal L-leucyl-L-glutamyl-[protein] + tRNA(Leu) + H(+). It carries out the reaction N-terminal L-aspartyl-[protein] + L-leucyl-tRNA(Leu) = N-terminal L-leucyl-L-aspartyl-[protein] + tRNA(Leu) + H(+). In terms of biological role, functions in the N-end rule pathway of protein degradation where it conjugates Leu from its aminoacyl-tRNA to the N-termini of proteins containing an N-terminal aspartate or glutamate. The chain is Aspartate/glutamate leucyltransferase from Leptospira interrogans serogroup Icterohaemorrhagiae serovar copenhageni (strain Fiocruz L1-130).